Consider the following 344-residue polypeptide: Cyclin-D1-binding protein 1 homolog (344 aa).

A disordered region spans residues 191–215; sequence SQDPFGDVLDDDDDDEGGRGNQDRY.

It belongs to the CCNDBP1 family.

Its subcellular location is the cytoplasm. It localises to the nucleus. Its function is as follows. May negatively regulate cell cycle progression. In Danio rerio (Zebrafish), this protein is Cyclin-D1-binding protein 1 homolog (ccndbp1).